A 283-amino-acid chain; its full sequence is 3-methyl-2-oxobutanoate hydroxymethyltransferase (283 aa).

The Mg(2+) site is built by aspartate 44 and aspartate 83. Residues 44–45, aspartate 83, and lysine 112 each bind 3-methyl-2-oxobutanoate; that span reads DS. Glutamate 114 serves as a coordination point for Mg(2+). Glutamate 181 acts as the Proton acceptor in catalysis.

It belongs to the PanB family. Homodecamer; pentamer of dimers. Requires Mg(2+) as cofactor.

The protein resides in the cytoplasm. It catalyses the reaction 3-methyl-2-oxobutanoate + (6R)-5,10-methylene-5,6,7,8-tetrahydrofolate + H2O = 2-dehydropantoate + (6S)-5,6,7,8-tetrahydrofolate. Its pathway is cofactor biosynthesis; coenzyme A biosynthesis. Functionally, catalyzes the reversible reaction in which hydroxymethyl group from 5,10-methylenetetrahydrofolate is transferred onto alpha-ketoisovalerate to form ketopantoate. The chain is 3-methyl-2-oxobutanoate hydroxymethyltransferase from Pyrococcus furiosus (strain ATCC 43587 / DSM 3638 / JCM 8422 / Vc1).